The following is a 330-amino-acid chain: Biotin synthase (330 aa).

A Radical SAM core domain is found at 42–268 (YYGRKVKLNM…INPSKEIRIA (227 aa)). Residues C60, C64, and C67 each contribute to the [4Fe-4S] cluster site. [2Fe-2S] cluster is bound by residues C103, C136, C196, and R266.

The protein belongs to the radical SAM superfamily. Biotin synthase family. In terms of assembly, homodimer. [4Fe-4S] cluster serves as cofactor. The cofactor is [2Fe-2S] cluster.

The catalysed reaction is (4R,5S)-dethiobiotin + (sulfur carrier)-SH + 2 reduced [2Fe-2S]-[ferredoxin] + 2 S-adenosyl-L-methionine = (sulfur carrier)-H + biotin + 2 5'-deoxyadenosine + 2 L-methionine + 2 oxidized [2Fe-2S]-[ferredoxin]. Its pathway is cofactor biosynthesis; biotin biosynthesis; biotin from 7,8-diaminononanoate: step 2/2. Catalyzes the conversion of dethiobiotin (DTB) to biotin by the insertion of a sulfur atom into dethiobiotin via a radical-based mechanism. The sequence is that of Biotin synthase from Macrococcus caseolyticus (strain JCSC5402) (Macrococcoides caseolyticum).